A 242-amino-acid chain; its full sequence is Probable proteasome subunit alpha type-7 (242 aa).

This sequence belongs to the peptidase T1A family. The 26S proteasome consists of a 20S proteasome core and two 19S regulatory subunits. The 20S proteasome core is composed of 28 subunits that are arranged in four stacked rings, resulting in a barrel-shaped structure. The two end rings are each formed by seven alpha subunits, and the two central rings are each formed by seven beta subunits. The catalytic chamber with the active sites is on the inside of the barrel.

The protein localises to the cytoplasm. It is found in the nucleus. The proteasome degrades poly-ubiquitinated proteins in the cytoplasm and in the nucleus. It is essential for the regulated turnover of proteins and for the removal of misfolded proteins. The proteasome is a multicatalytic proteinase complex that is characterized by its ability to cleave peptides with Arg, Phe, Tyr, Leu, and Glu adjacent to the leaving group at neutral or slightly basic pH. It has an ATP-dependent proteolytic activity. This is Probable proteasome subunit alpha type-7 (PRE10) from Encephalitozoon cuniculi (strain GB-M1) (Microsporidian parasite).